The sequence spans 225 residues: ATP-dependent Clp protease proteolytic subunit (225 aa).

Ser-126 acts as the Nucleophile in catalysis. Residue His-151 is part of the active site.

The protein belongs to the peptidase S14 family. As to quaternary structure, fourteen ClpP subunits assemble into 2 heptameric rings which stack back to back to give a disk-like structure with a central cavity, resembling the structure of eukaryotic proteasomes.

The protein resides in the cytoplasm. The catalysed reaction is Hydrolysis of proteins to small peptides in the presence of ATP and magnesium. alpha-casein is the usual test substrate. In the absence of ATP, only oligopeptides shorter than five residues are hydrolyzed (such as succinyl-Leu-Tyr-|-NHMec, and Leu-Tyr-Leu-|-Tyr-Trp, in which cleavage of the -Tyr-|-Leu- and -Tyr-|-Trp bonds also occurs).. Its function is as follows. Cleaves peptides in various proteins in a process that requires ATP hydrolysis. Has a chymotrypsin-like activity. Plays a major role in the degradation of misfolded proteins. The chain is ATP-dependent Clp protease proteolytic subunit from Psychrobacter arcticus (strain DSM 17307 / VKM B-2377 / 273-4).